Here is a 255-residue protein sequence, read N- to C-terminus: Complement C1q-like protein 3 (255 aa).

The N-terminal stretch at 1–20 is a signal peptide; it reads MVLLLVILIPVLVSSAGTSA. Residues 39–109 are disordered; it reads KAPSTAATPD…GLPGPPGAPG (71 aa). The 51-residue stretch at 61–111 folds into the Collagen-like domain; it reads GPKGEAGRPGKAGPRGPPGEPGPPGPMGPPGEKGEPGRQGLPGPPGAPGLN. The segment covering 75–89 has biased composition (pro residues); sequence RGPPGEPGPPGPMGP. Residues 122–255 form the C1q domain; the sequence is STVPKIAFYA…TFSGFIIYAD (134 aa).

In terms of assembly, forms homooligomers. Interacts with ADGRB3. Interacts with C1QL2 and C1QL4, when proteins are coexpressed; this interaction does not occur after secretion. As to expression, highly expressed in adipose tissue, with expression levels at least 2 orders of magnitude higher than in other tissues, including brain and kidney.

It is found in the secreted. May regulate the number of excitatory synapses that are formed on hippocampus neurons. Has no effect on inhibitory synapses. Plays a role in glucose homeostasis. Via AMPK signaling pathway, stimulates glucose uptake in adipocytes, myotubes and hepatocytes and enhances insulin-stimulated glucose uptake. In a hepatoma cell line, reduces the expression of gluconeogenic enzymes G6PC1 and PCK1 and hence decreases de novo glucose production. The protein is Complement C1q-like protein 3 (C1QL3) of Homo sapiens (Human).